We begin with the raw amino-acid sequence, 711 residues long: Interferon-induced GTP-binding protein Mx2 (711 aa).

Disordered regions lie at residues 1 to 26 (MPKPRMSWPYQRHRQASSPPHPHKEM) and 62 to 88 (MLTLSPQQPGGKSGQQTSKGPENNLYS). The segment covering 66–82 (SPQQPGGKSGQQTSKGP) has biased composition (low complexity). A Dynamin-type G domain is found at 112–383 (DLALPTIAVI…LIGHISKSLP (272 aa)). The segment at 122-129 (GDQSSGKS) is G1 motif. 122–129 (GDQSSGKS) is a GTP binding site. A G2 motif region spans residues 147–149 (ITR). Positions 221–224 (DLPG) are G3 motif. GTP-binding positions include 221 to 225 (DLPGI) and 290 to 293 (TKPD). A G4 motif region spans residues 290-293 (TKPD). The segment at 322-325 (KCRG) is G5 motif. One can recognise a GED domain in the interval 619–710 (ITEIGVHVNA…TLSKFAQSLQ (92 aa)).

This sequence belongs to the TRAFAC class dynamin-like GTPase superfamily. Dynamin/Fzo/YdjA family. As to expression, ubiquitous.

It is found in the cytoplasm. The protein localises to the nucleus. Functionally, interferon-induced dynamin-like GTPase with antiviral activity against influenza virus A (FLUAV). The sequence is that of Interferon-induced GTP-binding protein Mx2 (MX2) from Sus scrofa (Pig).